We begin with the raw amino-acid sequence, 360 residues long: MDRSAGLPVRLLLLLLLLLLWSVAPQALRPGSHSLRYLFMGASKPDLGLPFFEALGYVDDQLFVSYNHESRRAEPRAPWILGQTSSQLWLQLSQSLKGWDYMFIVDFWTIMGNYNHSKVTKLRVVPESHILQVILGCEVHEDNSTSGFWKYGYDGQDHLEFCPKTLNWSAAEPRAWATKMEWEEHRIRARQSRDYLQRDCPQQLKQVLELQRGVLGQQVPTLVKVTRHWASTGTSLRCQALNFFPQNITMRWLKDSQPLDAKDVNPENVLPNGDGTYQGWLTLAVAPGEETRFSCQVEHPGLDQPLTATWEPSRSQDMIIGIISGITICAIFFVGILILVLRKRKVSGGTMGDYVLTECE.

Residues Met1–Pro25 form the signal peptide. The alpha-1 stretch occupies residues Gln26–Glu127. At Gln26–Ile319 the chain is on the extracellular side. Residues Asn115, Asn143, Asn167, and Asn247 are each glycosylated (N-linked (GlcNAc...) asparagine). The alpha-2 stretch occupies residues Ser128 to Gln218. Intrachain disulfides connect Cys137/Cys200 and Cys238/Cys295. The segment at Val219–Trp310 is alpha-3. An Ig-like C1-type domain is found at Pro220–Thr309. Positions Glu311–Ile319 are connecting peptide. Residues Ile320 to Val340 form a helical membrane-spanning segment. Residues Leu341–Glu360 lie on the Cytoplasmic side of the membrane.

Belongs to the MHC class I family. Binds TFR through the extracellular domain in a pH-dependent manner.

It is found in the cell membrane. Binds to transferrin receptor (TFR) and reduces its affinity for iron-loaded transferrin. In Rattus norvegicus (Rat), this protein is Hereditary hemochromatosis protein homolog (Hfe).